The sequence spans 282 residues: uncharacterized protein (282 aa).

This sequence to M.tuberculosis Rv2161c and Rv3079c.

This is an uncharacterized protein from Mycobacterium tuberculosis (strain CDC 1551 / Oshkosh).